A 216-amino-acid chain; its full sequence is Ras-related protein RABE1d (216 aa).

Residue 22–29 (GDSGVGKS) coordinates GTP. The Effector region signature appears at 44-52 (FITTIGIDF). Residues 70–74 (DTAGQ), 128–131 (NKAD), and 159–160 (SA) contribute to the GTP site. Positions 196–216 (TKQDTAASSSTAEKSACCSYV) are disordered. Residues 200 to 216 (TAASSSTAEKSACCSYV) show a composition bias toward low complexity. Residues Cys-212 and Cys-213 are each lipidated (S-geranylgeranyl cysteine).

It belongs to the small GTPase superfamily. Rab family. As to quaternary structure, interacts with PI5K2.

It localises to the golgi apparatus membrane. The protein resides in the cell membrane. In terms of biological role, involved in membrane trafficking from the Golgi to the plasma membrane. The protein is Ras-related protein RABE1d (RABE1D) of Arabidopsis thaliana (Mouse-ear cress).